Here is a 338-residue protein sequence, read N- to C-terminus: Clathrin light chain 1 (338 aa).

Residues 1 to 111 (MATFDDGDFP…NEMREEGFQR (111 aa)) are disordered. 2 stretches are compositionally biased toward polar residues: residues 29–47 (SEAQ…SSFN) and 61–73 (SSPN…PFES). The segment covering 102-111 (NEMREEGFQR) has biased composition (basic and acidic residues). Residues 102-163 (NEMREEGFQR…TIETNKTDNR (62 aa)) are involved in binding clathrin heavy chain. The stretch at 122–142 (LEEKEKKEKEMRNQIITEAED) forms a coiled coil. The segment at 192 to 338 (IPREVPNIEK…VTEAEGTKAE (147 aa)) is disordered. Positions 197–212 (PNIEKKRGKKDPDKKP) are enriched in basic and acidic residues. Over residues 241–253 (NPPPHMMPPPPPA) the composition is skewed to pro residues. Over residues 254 to 304 (KDAKDGKDAKDGKDAKTGKDGKDAKGGKDAKDLKDGKPADPKVTEEKRPSP) the composition is skewed to basic and acidic residues.

The protein belongs to the clathrin light chain family. As to quaternary structure, clathrin coats are formed from molecules containing 3 heavy chains and 3 light chains.

The protein resides in the cytoplasmic vesicle membrane. It localises to the membrane. The protein localises to the coated pit. In terms of biological role, clathrin is the major protein of the polyhedral coat of coated pits and vesicles. This is Clathrin light chain 1 from Arabidopsis thaliana (Mouse-ear cress).